Consider the following 172-residue polypeptide: Bifunctional protein PyrR (172 aa).

Positions 90 to 102 (LVLVDDVLMSGRT) match the PRPP-binding motif.

The protein belongs to the purine/pyrimidine phosphoribosyltransferase family. PyrR subfamily.

It carries out the reaction UMP + diphosphate = 5-phospho-alpha-D-ribose 1-diphosphate + uracil. Its function is as follows. Regulates the transcription of the pyrimidine nucleotide (pyr) operon in response to exogenous pyrimidines. In terms of biological role, also displays a weak uracil phosphoribosyltransferase activity which is not physiologically significant. This Pseudomonas entomophila (strain L48) protein is Bifunctional protein PyrR.